The following is a 269-amino-acid chain: MSAALFSLDGPARGAPWPAEPAPFYEPGRAGKPGRGAEPGALGEPGAAAPAMYDDESAIDFSAYIDSMAAVPTLELCHDELFADLFNSNHKAGGAGPLELLPGGPARPLGPGPAAPRLLKREPDWGDGDAPGSLLPAQVAACAQTVVSLAAAGQPTPPTSPEPPRSSPRQTPAPGPAREKSAGKRGPDRGSPEYRQRRERNNIAVRKSRDKAKRRNQEMQQKLVELSAENEKLHQRVEQLTRDLAGLRQFFKQLPSPPFLPAAGTADCR.

Disordered stretches follow at residues 1–48 (MSAA…PGAA), 97–133 (PLEL…APGS), and 151–219 (AAGQ…NQEM). Serine 2 bears the N-acetylserine mark. 2 stretches are compositionally biased toward low complexity: residues 36 to 48 (GAEP…PGAA) and 97 to 107 (PLELLPGGPAR). Residue lysine 120 forms a Glycyl lysine isopeptide (Lys-Gly) (interchain with G-Cter in SUMO) linkage. Residues 155–175 (PTPPTSPEPPRSSPRQTPAPG) are compositionally biased toward pro residues. Residues 177–201 (AREKSAGKRGPDRGSPEYRQRRERN) are compositionally biased toward basic and acidic residues. Residues 191-254 (SPEYRQRRER…AGLRQFFKQL (64 aa)) form the bZIP domain. The tract at residues 195–222 (RQRRERNNIAVRKSRDKAKRRNQEMQQK) is basic motif. The segment at 226-254 (LSAENEKLHQRVEQLTRDLAGLRQFFKQL) is leucine-zipper.

This sequence belongs to the bZIP family. C/EBP subfamily. Binds DNA as a homodimer and as a heterodimer. Can form stable heterodimers with CEBPB. Can form stable heterodimers with CEBPA and CEBPE. Directly interacts with SPI1/PU.1; this interaction does not affect DNA-binding properties of each partner. Interacts with PRDM16.

It is found in the nucleus. Functionally, transcription activator that recognizes two different DNA motifs: the CCAAT homology common to many promoters and the enhanced core homology common to many enhancers. Important transcription factor regulating the expression of genes involved in immune and inflammatory responses. Transcriptional activator that enhances IL6 transcription alone and as heterodimer with CEBPB. This is CCAAT/enhancer-binding protein delta (CEBPD) from Homo sapiens (Human).